Reading from the N-terminus, the 606-residue chain is MNLFTSFTLLTLLILTTPIMMSHTGSHVNNKYQSYVKNIVFCAFITSLVPAMVYLHTNQETLISNWHWITIQTLKLTLSFKMDYFSLMFMPVALFITWSIMEFSMWYMHSDPYINQFFKYLLLFLITMLILVTANNLFQLFIGWEGVGIMSFLLIGWWFGRTDANTAALQAILYNRIGDIGLLASMAWFLSNMNTWDLEQIFMLNQNPLNFPLMGLVLAAAGKSAQFGLHPWLPSAMEGPTPVSALLHSSTMVVAGIFLLVRFYPLMENNKLIQTVTLCLGAITTLFTAICALTQNDIKKIIAFSTSSQLGLMMVTIGLNQPYLAFLHICTHAFFKAMLFLCSGSIIHNLNNEQDIRKMGGLFKALPFTTTALIIGCLALTGMPFLTGFYSKDPIIEAATSSYTNAWALLLTLIATSLTAVYSTRIIFFALLGQPRFPPSTTINENNPLLINPIKRLLVGSIFAGFILSNSIPPMTTPLMTMPLHLKLTALAMTTLGFIIAFEINLDTQNLKHKHPSNSFKFSTLLGYFPTIMHRLPPHLDLLMSQKLATSLLDLTWLETILPKTTALIQLKASTLTSNQQGLIKLYFLSFLITITLSMILFNYPE.

Transmembrane regions (helical) follow at residues 1–21 (MNLFTSFTLLTLLILTTPIMM), 35–55 (YVKNIVFCAFITSLVPAMVYL), 87–107 (LMFMPVALFITWSIMEFSMWY), 114–134 (INQFFKYLLLFLITMLILVTA), 140–160 (LFIGWEGVGIMSFLLIGWWFG), 171–191 (AILYNRIGDIGLLASMAWFLS), 211–233 (FPLMGLVLAAAGKSAQFGLHPWL), 241–261 (TPVSALLHSSTMVVAGIFLLV), 272–292 (LIQTVTLCLGAITTLFTAICA), 301–320 (IIAFSTSSQLGLMMVTIGLN), 325–347 (AFLHICTHAFFKAMLFLCSGSII), 366–386 (LPFTTTALIIGCLALTGMPFL), 413–433 (LIATSLTAVYSTRIIFFALLG), 457–477 (LLVGSIFAGFILSNSIPPMTT), 482–502 (MPLHLKLTALAMTTLGFIIAF), and 582–602 (GLIKLYFLSFLITITLSMILF).

This sequence belongs to the complex I subunit 5 family. In terms of assembly, core subunit of respiratory chain NADH dehydrogenase (Complex I) which is composed of 45 different subunits.

It localises to the mitochondrion inner membrane. The enzyme catalyses a ubiquinone + NADH + 5 H(+)(in) = a ubiquinol + NAD(+) + 4 H(+)(out). In terms of biological role, core subunit of the mitochondrial membrane respiratory chain NADH dehydrogenase (Complex I) which catalyzes electron transfer from NADH through the respiratory chain, using ubiquinone as an electron acceptor. Essential for the catalytic activity and assembly of complex I. This chain is NADH-ubiquinone oxidoreductase chain 5 (MT-ND5), found in Balaenoptera physalus (Fin whale).